Here is a 186-residue protein sequence, read N- to C-terminus: uncharacterized protein (186 aa).

The first 28 residues, 1 to 28 (MSVKPAALFRISAALAVAGLGASLIASA), serve as a signal peptide directing secretion.

This is an uncharacterized protein from Rhizobium meliloti (strain 1021) (Ensifer meliloti).